The primary structure comprises 143 residues: Large ribosomal subunit protein uL13 (143 aa).

The protein belongs to the universal ribosomal protein uL13 family. In terms of assembly, part of the 50S ribosomal subunit.

In terms of biological role, this protein is one of the early assembly proteins of the 50S ribosomal subunit, although it is not seen to bind rRNA by itself. It is important during the early stages of 50S assembly. The sequence is that of Large ribosomal subunit protein uL13 from Dichelobacter nodosus (strain VCS1703A).